The following is a 219-amino-acid chain: Elongation factor Ts (219 aa).

The involved in Mg(2+) ion dislocation from EF-Tu stretch occupies residues 83–86 (TDFV).

It belongs to the EF-Ts family.

It localises to the cytoplasm. In terms of biological role, associates with the EF-Tu.GDP complex and induces the exchange of GDP to GTP. It remains bound to the aminoacyl-tRNA.EF-Tu.GTP complex up to the GTP hydrolysis stage on the ribosome. The chain is Elongation factor Ts from Synechococcus sp. (strain WH7803).